The following is a 381-amino-acid chain: Pentatricopeptide repeat-containing protein 2, mitochondrial (381 aa).

The PPR repeat unit spans residues 159 to 193 (TSFNILMDMLFTKGKYERALQVLIEMKNQDVRFSK). Position 375 is a phosphoserine (S375).

The protein belongs to the PTCD2 family. In terms of tissue distribution, high expression in heart and liver and low expression in kidney, brain and testis.

Its subcellular location is the mitochondrion. Its function is as follows. Involved in mitochondrial RNA maturation and mitochondrial respiratory chain function. The sequence is that of Pentatricopeptide repeat-containing protein 2, mitochondrial (Ptcd2) from Mus musculus (Mouse).